Reading from the N-terminus, the 214-residue chain is Adenylate kinase (214 aa).

10 to 15 (GAGKGT) contributes to the ATP binding site. The NMP stretch occupies residues 30-59 (STGDMLRAAIKAGTELGKQAKAVIDAGQLV). AMP is bound by residues Thr31, Arg36, 57–59 (QLV), 85–88 (GFPR), and Gln92. The LID stretch occupies residues 122–159 (GRRAHLPSGRTYHVVYNPPKVEGKDDVTGEDLVIREDD). ATP is bound by residues Arg123 and 132 to 133 (TY). AMP contacts are provided by Arg156 and Arg167. Lys200 provides a ligand contact to ATP.

Belongs to the adenylate kinase family. In terms of assembly, monomer.

It localises to the cytoplasm. It catalyses the reaction AMP + ATP = 2 ADP. The protein operates within purine metabolism; AMP biosynthesis via salvage pathway; AMP from ADP: step 1/1. Catalyzes the reversible transfer of the terminal phosphate group between ATP and AMP. Plays an important role in cellular energy homeostasis and in adenine nucleotide metabolism. The sequence is that of Adenylate kinase from Vibrio cholerae serotype O1 (strain ATCC 39541 / Classical Ogawa 395 / O395).